The primary structure comprises 514 residues: Maturase K (514 aa).

This sequence belongs to the intron maturase 2 family. MatK subfamily.

It is found in the plastid. The protein resides in the chloroplast. Its function is as follows. Usually encoded in the trnK tRNA gene intron. Probably assists in splicing its own and other chloroplast group II introns. This is Maturase K from Plantago argentea (Silver plantain).